The following is a 218-amino-acid chain: Transmembrane gamma-carboxyglutamic acid protein 1 (218 aa).

A propeptide spanning residues 1 to 20 (MGRVFLTGEKANSVLKRYPR) is cleaved from the precursor. Residues 20 to 66 (RANGFFEEIRQGNIERECKEEFCTFEEAREAFENNEKTKEFWSTYTK) form the Gla domain. Over 21–80 (ANGFFEEIRQGNIERECKEEFCTFEEAREAFENNEKTKEFWSTYTKAQQGESNRGSDWFQ) the chain is Extracellular. A disulfide bridge links Cys-37 with Cys-42. The chain crosses the membrane as a helical span at residues 81–101 (FYLTFPLIFGLFIILLVIFLI). Residues 102 to 218 (WRCFLRNKTR…PMVPVVTTIK (117 aa)) are Cytoplasmic-facing. The disordered stretch occupies residues 161–195 (TRLSNCDPPPTYEEATGQVNLQRSETEPHLDPPPE).

Gla residues are produced after subsequent post-translational modifications of glutamate by a vitamin K-dependent gamma-carboxylase.

The protein localises to the membrane. The chain is Transmembrane gamma-carboxyglutamic acid protein 1 (PRRG1) from Pongo abelii (Sumatran orangutan).